The sequence spans 422 residues: Gamma-glutamyl phosphate reductase (422 aa).

The protein belongs to the gamma-glutamyl phosphate reductase family.

The protein resides in the cytoplasm. The catalysed reaction is L-glutamate 5-semialdehyde + phosphate + NADP(+) = L-glutamyl 5-phosphate + NADPH + H(+). It participates in amino-acid biosynthesis; L-proline biosynthesis; L-glutamate 5-semialdehyde from L-glutamate: step 2/2. In terms of biological role, catalyzes the NADPH-dependent reduction of L-glutamate 5-phosphate into L-glutamate 5-semialdehyde and phosphate. The product spontaneously undergoes cyclization to form 1-pyrroline-5-carboxylate. This Chlorobium phaeovibrioides (strain DSM 265 / 1930) (Prosthecochloris vibrioformis (strain DSM 265)) protein is Gamma-glutamyl phosphate reductase.